Here is a 460-residue protein sequence, read N- to C-terminus: MLO-like protein 9 (460 aa).

The Extracellular portion of the chain corresponds to 1–21 (MAGGGGGGGGEGPRQLDQTPT). Residues 22-42 (WAVSTVCGVIILISIILELII) form a helical membrane-spanning segment. At 43 to 67 (HKVGEVFERKKKKALFEALEKIKNE) the chain is on the cytoplasmic side. Residues 68-88 (LMVLGFISLLLTFGQNYIASI) form a helical membrane-spanning segment. Over 89-158 (CVPSRYGHAM…ISLNALHQVH (70 aa)) the chain is Extracellular. The chain crosses the membrane as a helical span at residues 159–179 (IFIFFLAVFHVIYSAITMMLG). At 180-289 (RAKIRGWKVW…KVVVGIRPEL (110 aa)) the chain is on the cytoplasmic side. A helical membrane pass occupies residues 290–310 (WAFVMLFLLFDVHGWYVTAVI). Residues 311 to 315 (TMIPP) are Extracellular-facing. Residues 316 to 336 (LLTLAIGTKLQAIISYMALEI) traverse the membrane as a helical segment. Residues 337–366 (QERHAVIQGMPVVNVSDQHFWFEKPDLVLH) lie on the Cytoplasmic side of the membrane. The chain crosses the membrane as a helical span at residues 367–387 (MIHFVLFQNAFEITYFFWIWY). Topologically, residues 388–398 (EFGLRSCFHHH) are extracellular. A helical transmembrane segment spans residues 399–419 (FGLIIIRVCLGVGVQFLCSYI). At 420–460 (TLPLYALVTQMGSTMKRSVFDEQTSKALEQWHKKARKKNEK) the chain is on the cytoplasmic side. Positions 441 to 460 (EQTSKALEQWHKKARKKNEK) are calmodulin-binding.

The protein belongs to the MLO family.

It localises to the membrane. Functionally, may be involved in modulation of pathogen defense and leaf cell death. Activity seems to be regulated by Ca(2+)-dependent calmodulin binding and seems not to require heterotrimeric G proteins. This chain is MLO-like protein 9 (MLO9), found in Arabidopsis thaliana (Mouse-ear cress).